A 545-amino-acid polypeptide reads, in one-letter code: Chaperonin GroEL (545 aa).

ATP-binding positions include 30 to 33 (TLGP), lysine 51, 87 to 91 (DGTTT), glycine 415, and aspartate 495.

It belongs to the chaperonin (HSP60) family. In terms of assembly, forms a cylinder of 14 subunits composed of two heptameric rings stacked back-to-back. Interacts with the co-chaperonin GroES.

Its subcellular location is the cytoplasm. The catalysed reaction is ATP + H2O + a folded polypeptide = ADP + phosphate + an unfolded polypeptide.. Its function is as follows. Together with its co-chaperonin GroES, plays an essential role in assisting protein folding. The GroEL-GroES system forms a nano-cage that allows encapsulation of the non-native substrate proteins and provides a physical environment optimized to promote and accelerate protein folding. The polypeptide is Chaperonin GroEL (Shewanella putrefaciens (strain CN-32 / ATCC BAA-453)).